The chain runs to 289 residues: 2-hydroxy-6-oxononadienedioate/2-hydroxy-6-oxononatrienedioate hydrolase 1 (289 aa).

One can recognise an AB hydrolase-1 domain in the interval 39 to 275 (TVVMLHGSGP…RCGHWAQWEH (237 aa)). H269 functions as the Proton acceptor in the catalytic mechanism.

This sequence belongs to the AB hydrolase superfamily. MhpC family. In terms of assembly, homodimer.

It catalyses the reaction (2Z,4E)-2-hydroxy-6-oxonona-2,4-dienedioate + H2O = (2Z)-2-hydroxypenta-2,4-dienoate + succinate + H(+). It carries out the reaction (2Z,4E,7E)-2-hydroxy-6-oxonona-2,4,7-trienedioate + H2O = (2Z)-2-hydroxypenta-2,4-dienoate + fumarate + H(+). It participates in aromatic compound metabolism; 3-phenylpropanoate degradation. In terms of biological role, catalyzes the cleavage of the C5-C6 bond of 2-hydroxy-6-oxononadienedioate and 2-hydroxy-6-oxononatrienedioate, a dienol ring fission product of the bacterial meta-cleavage pathway for degradation of phenylpropionic acid. The sequence is that of 2-hydroxy-6-oxononadienedioate/2-hydroxy-6-oxononatrienedioate hydrolase 1 from Dechloromonas aromatica (strain RCB).